Reading from the N-terminus, the 171-residue chain is Synaptonemal complex central element protein 2 (171 aa).

The tract at residues 1 to 52 is disordered; sequence MERHGVAAPPVELKDQEPPAIVESGEHRQSENHEETPGSVAPSASCQLPGPF. Basic and acidic residues predominate over residues 24–36; the sequence is SGEHRQSENHEET. 2 coiled-coil regions span residues 52–83 and 118–146; these read FSSL…DHAL and QERL…QTVE.

Belongs to the SYCE family. In terms of assembly, homodimer. Found in a complex with SYCP1 and SYCE1. Interacts with SYCP1 and SYCE1. Interacts with SYCE3. Interacts with TEX12. In terms of tissue distribution, meiotic cells (at protein level). Expressed in the ovary and testis.

It is found in the nucleus. The protein localises to the chromosome. Major component of the transverse central element of synaptonemal complexes (SCS), formed between homologous chromosomes during meiotic prophase. Requires SYCP1 in order to be incorporated into the central element. May have a role in the synaptonemal complex assembly, stabilization and recombination. This is Synaptonemal complex central element protein 2 (Syce2) from Mus musculus (Mouse).